We begin with the raw amino-acid sequence, 201 residues long: Proteasome subunit beta 1 (201 aa).

Position 1 (Met1) is a propeptide, removed in mature form; by autocatalysis. Thr2 serves as the catalytic Nucleophile.

This sequence belongs to the peptidase T1B family. As to quaternary structure, the 20S proteasome core is composed of 14 alpha and 14 beta subunits that assemble into four stacked heptameric rings, resulting in a barrel-shaped structure. The two inner rings, each composed of seven catalytic beta subunits, are sandwiched by two outer rings, each composed of seven alpha subunits. The catalytic chamber with the active sites is on the inside of the barrel. Has a gated structure, the ends of the cylinder being occluded by the N-termini of the alpha-subunits. Is capped at one or both ends by the proteasome regulatory ATPase, PAN.

It localises to the cytoplasm. The catalysed reaction is Cleavage of peptide bonds with very broad specificity.. Its activity is regulated as follows. The formation of the proteasomal ATPase PAN-20S proteasome complex, via the docking of the C-termini of PAN into the intersubunit pockets in the alpha-rings, triggers opening of the gate for substrate entry. Interconversion between the open-gate and close-gate conformations leads to a dynamic regulation of the 20S proteasome proteolysis activity. In terms of biological role, component of the proteasome core, a large protease complex with broad specificity involved in protein degradation. The polypeptide is Proteasome subunit beta 1 (Pyrobaculum neutrophilum (strain DSM 2338 / JCM 9278 / NBRC 100436 / V24Sta) (Thermoproteus neutrophilus)).